The primary structure comprises 510 residues: MLQIVGALILLIAGFAILRLLFRALISTASALAGLILLCLFGPALLAGYITERITRLFHIRWLAGVFLTIAGMIISFMWGLDGKHIALEAHTFDSVKFILTTALAGGLLAVPLQIKNIQQNGITPEDISKEINGYYCCFYTAFFLMACSACAPLIALQYDISPSLMWWGGLLYWLAALVTLLWAASQIQALKKLTCAISQTLEEQPVLNSKSWLTSLQNDYSLPDSLTERIWLTLISQRISRGELREFELADGNWLLNNAWYERNMAGFNEQLKENLSFTPDELKTLFRNRLNLSPEANDDFLDRCLDGGDWYPFSEGRRFVSFHHVDELRICASCGLTEVHHAPENHKPDPEWYCSSLCRETETLCQEIYERPYNSFISDATANGLILMKLPETWSTNEKMFASGGQGHGFAAERGNHIVDRVRLKNARILGDNNARNGADRLVSGTEIQTKYCSTAARSVGAAFDGQNGQYRYMGNNGPMQLEVPRDQYAGAVETMRNKIREGKVEER.

A topological domain (cytoplasmic) is located at residue Met1. The helical transmembrane segment at 2-22 (LQIVGALILLIAGFAILRLLF) threads the bilayer. Residues 23-30 (RALISTAS) are Periplasmic-facing. The helical transmembrane segment at 31 to 51 (ALAGLILLCLFGPALLAGYIT) threads the bilayer. The Cytoplasmic portion of the chain corresponds to 52–61 (ERITRLFHIR). The helical transmembrane segment at 62–82 (WLAGVFLTIAGMIISFMWGLD) threads the bilayer. Over 83 to 94 (GKHIALEAHTFD) the chain is Periplasmic. Residues 95-115 (SVKFILTTALAGGLLAVPLQI) form a helical membrane-spanning segment. Topologically, residues 116-136 (KNIQQNGITPEDISKEINGYY) are cytoplasmic. The helical transmembrane segment at 137–157 (CCFYTAFFLMACSACAPLIAL) threads the bilayer. At 158–164 (QYDISPS) the chain is on the periplasmic side. A helical transmembrane segment spans residues 165-185 (LMWWGGLLYWLAALVTLLWAA). Residues 186 to 510 (SQIQALKKLT…KIREGKVEER (325 aa)) are Cytoplasmic-facing.

The protein localises to the cell inner membrane. This is Inner membrane protein YeeR (yeeR) from Escherichia coli (strain K12).